The following is a 216-amino-acid chain: Protein-L-isoaspartate O-methyltransferase (216 aa).

S64 is an active-site residue.

Belongs to the methyltransferase superfamily. L-isoaspartyl/D-aspartyl protein methyltransferase family.

It is found in the cytoplasm. The enzyme catalyses [protein]-L-isoaspartate + S-adenosyl-L-methionine = [protein]-L-isoaspartate alpha-methyl ester + S-adenosyl-L-homocysteine. Functionally, catalyzes the methyl esterification of L-isoaspartyl residues in peptides and proteins that result from spontaneous decomposition of normal L-aspartyl and L-asparaginyl residues. It plays a role in the repair and/or degradation of damaged proteins. This chain is Protein-L-isoaspartate O-methyltransferase, found in Paracoccus denitrificans (strain Pd 1222).